Here is a 307-residue protein sequence, read N- to C-terminus: Ribonuclease Z (307 aa).

Zn(2+) is bound by residues H63, H65, D67, H68, H141, D212, and H270. D67 serves as the catalytic Proton acceptor.

Belongs to the RNase Z family. Homodimer. Zn(2+) is required as a cofactor.

It carries out the reaction Endonucleolytic cleavage of RNA, removing extra 3' nucleotides from tRNA precursor, generating 3' termini of tRNAs. A 3'-hydroxy group is left at the tRNA terminus and a 5'-phosphoryl group is left at the trailer molecule.. Functionally, zinc phosphodiesterase, which displays some tRNA 3'-processing endonuclease activity. Probably involved in tRNA maturation, by removing a 3'-trailer from precursor tRNA. This is Ribonuclease Z from Bacillus cereus (strain ATCC 14579 / DSM 31 / CCUG 7414 / JCM 2152 / NBRC 15305 / NCIMB 9373 / NCTC 2599 / NRRL B-3711).